Consider the following 446-residue polypeptide: 3-phosphoshikimate 1-carboxyvinyltransferase (446 aa).

The interval 1-20 (MIMAKPLSSRRAAPLAGSAP) is disordered. Residues Lys25, Ser26, and Arg30 each contribute to the 3-phosphoshikimate site. Lys25 provides a ligand contact to phosphoenolpyruvate. Positions 98 and 126 each coordinate phosphoenolpyruvate. 3-phosphoshikimate is bound by residues Ser171, Gln173, Asp324, and Lys351. Residue Gln173 coordinates phosphoenolpyruvate. Asp324 (proton acceptor) is an active-site residue. Phosphoenolpyruvate-binding residues include Arg355 and Arg399.

It belongs to the EPSP synthase family. As to quaternary structure, monomer.

Its subcellular location is the cytoplasm. The catalysed reaction is 3-phosphoshikimate + phosphoenolpyruvate = 5-O-(1-carboxyvinyl)-3-phosphoshikimate + phosphate. The protein operates within metabolic intermediate biosynthesis; chorismate biosynthesis; chorismate from D-erythrose 4-phosphate and phosphoenolpyruvate: step 6/7. Its function is as follows. Catalyzes the transfer of the enolpyruvyl moiety of phosphoenolpyruvate (PEP) to the 5-hydroxyl of shikimate-3-phosphate (S3P) to produce enolpyruvyl shikimate-3-phosphate and inorganic phosphate. This is 3-phosphoshikimate 1-carboxyvinyltransferase from Paramagnetospirillum magneticum (strain ATCC 700264 / AMB-1) (Magnetospirillum magneticum).